Reading from the N-terminus, the 423-residue chain is Adenylosuccinate synthetase (423 aa).

GTP is bound by residues 12–18 (GDEGKGK) and 40–42 (GHT). Asp-13 acts as the Proton acceptor in catalysis. Residues Asp-13 and Gly-40 each contribute to the Mg(2+) site. Residues 13 to 16 (DEGK), 38 to 41 (NAGH), Thr-129, Arg-143, Gln-221, Thr-236, and Arg-300 each bind IMP. The active-site Proton donor is His-41. 296–302 (SVTGRKR) provides a ligand contact to substrate. GTP is bound by residues Arg-302 and 408–410 (SVG).

Belongs to the adenylosuccinate synthetase family. As to quaternary structure, homodimer. It depends on Mg(2+) as a cofactor.

The protein resides in the cytoplasm. It catalyses the reaction IMP + L-aspartate + GTP = N(6)-(1,2-dicarboxyethyl)-AMP + GDP + phosphate + 2 H(+). The protein operates within purine metabolism; AMP biosynthesis via de novo pathway; AMP from IMP: step 1/2. Plays an important role in the de novo pathway of purine nucleotide biosynthesis. Catalyzes the first committed step in the biosynthesis of AMP from IMP. The sequence is that of Adenylosuccinate synthetase from Bacteroides thetaiotaomicron (strain ATCC 29148 / DSM 2079 / JCM 5827 / CCUG 10774 / NCTC 10582 / VPI-5482 / E50).